Reading from the N-terminus, the 628-residue chain is Modular serine protease (628 aa).

The N-terminal stretch at 1 to 25 (MQLISFLSNPLFFCALLLKFRTIFA) is a signal peptide. 4 consecutive LDL-receptor class A domains span residues 26–64 (ACDS…LTCV), 69–107 (HCTK…LRCG), 122–163 (NCKE…ELCG), and 166–204 (ECPA…LLCN). 12 disulfides stabilise this stretch: C27/C39, C34/C52, C46/C63, C70/C82, C77/C95, C89/C106, C123/C135, C130/C149, C143/C162, C167/C179, C174/C192, and C186/C203. N36 is a glycosylation site (N-linked (GlcNAc...) asparagine). Residue N204 is glycosylated (N-linked (GlcNAc...) asparagine). Sushi domains follow at residues 222 to 285 (LGCP…KCVK) and 300 to 356 (ALCT…RCEQ). 4 disulfide bridges follow: C224–C270, C256–C283, C302–C341, and C326–C354. The 253-residue stretch at 369 to 621 (SSGGYTINNT…FEDMILNAMN (253 aa)) folds into the Peptidase S1 domain. An N-linked (GlcNAc...) asparagine glycan is attached at N376. C399 and C415 form a disulfide bridge. Active-site charge relay system residues include H414, D472, and S563. N621 is a glycosylation site (N-linked (GlcNAc...) asparagine).

Belongs to the peptidase S1 family. Post-translationally, may be proteolytically cleaved via an autocatalytic mechanism.

It is found in the secreted. Serine protease that plays a key role in innate immunity by activating the Toll pathway in response to infection with Gram-positive bacteria and fungi. During Gram-positive infection, acts downstream of PGRP-SA and upstream of Grass and Spz, and therefore appears to function in a pathway that links detection of Gram-positive lysine-type peptidoglycans to Toll activation. Functions in a separate pathway to the psh-mediated activation of the Toll pathway. The polypeptide is Modular serine protease (Drosophila melanogaster (Fruit fly)).